Here is a 439-residue protein sequence, read N- to C-terminus: Methionine aminopeptidase 2-2 (439 aa).

The interval 1-90 (MAAQAPPTDE…SQLFPDKQYP (90 aa)) is disordered. Positions 10-23 (ELSKLSVEDADNKP) are enriched in basic and acidic residues. Over residues 35–45 (DEDDSEDDAED) the composition is skewed to acidic residues. Residues 54–68 (AKKKKKRKPRKKKKN) show a composition bias toward basic residues. Position 192 (histidine 192) interacts with substrate. The a divalent metal cation site is built by aspartate 212, aspartate 223, and histidine 292. Histidine 300 contributes to the substrate binding site. Residues glutamate 325 and glutamate 420 each contribute to the a divalent metal cation site.

It belongs to the peptidase M24A family. Methionine aminopeptidase eukaryotic type 2 subfamily. It depends on Co(2+) as a cofactor. The cofactor is Zn(2+). Mn(2+) is required as a cofactor. Requires Fe(2+) as cofactor.

It is found in the cytoplasm. It carries out the reaction Release of N-terminal amino acids, preferentially methionine, from peptides and arylamides.. In terms of biological role, cotranslationally removes the N-terminal methionine from nascent proteins. The N-terminal methionine is often cleaved when the second residue in the primary sequence is small and uncharged (Met-Ala-, Cys, Gly, Pro, Ser, Thr, or Val). This is Methionine aminopeptidase 2-2 from Chaetomium globosum (strain ATCC 6205 / CBS 148.51 / DSM 1962 / NBRC 6347 / NRRL 1970) (Soil fungus).